A 277-amino-acid polypeptide reads, in one-letter code: Bis(5'-nucleosyl)-tetraphosphatase, symmetrical (277 aa).

Belongs to the Ap4A hydrolase family.

The catalysed reaction is P(1),P(4)-bis(5'-adenosyl) tetraphosphate + H2O = 2 ADP + 2 H(+). Functionally, hydrolyzes diadenosine 5',5'''-P1,P4-tetraphosphate to yield ADP. This Methylobacillus flagellatus (strain ATCC 51484 / DSM 6875 / VKM B-1610 / KT) protein is Bis(5'-nucleosyl)-tetraphosphatase, symmetrical.